Here is a 179-residue protein sequence, read N- to C-terminus: Adenine phosphoribosyltransferase (179 aa).

The protein belongs to the purine/pyrimidine phosphoribosyltransferase family. As to quaternary structure, homodimer.

It localises to the cytoplasm. The catalysed reaction is AMP + diphosphate = 5-phospho-alpha-D-ribose 1-diphosphate + adenine. Its pathway is purine metabolism; AMP biosynthesis via salvage pathway; AMP from adenine: step 1/1. In terms of biological role, catalyzes a salvage reaction resulting in the formation of AMP, that is energically less costly than de novo synthesis. The chain is Adenine phosphoribosyltransferase from Nitrobacter winogradskyi (strain ATCC 25391 / DSM 10237 / CIP 104748 / NCIMB 11846 / Nb-255).